A 369-amino-acid polypeptide reads, in one-letter code: RNA-binding protein rnp24 (369 aa).

3 disordered regions span residues 1-77 (MEPI…KKKE), 200-219 (TDFS…TASI), and 304-369 (RMRN…IKFD). Positions 105 to 206 (WGIWVGNLSF…KSNTDFSGRP (102 aa)) constitute an RRM 1 domain. Residues 209–219 (PANTLSKTASI) are compositionally biased toward polar residues. The 83-residue stretch at 228–310 (SILFVGNLDF…RSKRMRNKSP (83 aa)) folds into the RRM 2 domain. A compositionally biased stretch (basic and acidic residues) spans 325-341 (QEDKPNFKRARKIDPRS). A compositionally biased stretch (low complexity) spans 346-357 (AALAKAQRSSAA).

The protein resides in the nucleus. This chain is RNA-binding protein rnp24 (rnp24), found in Schizosaccharomyces pombe (strain 972 / ATCC 24843) (Fission yeast).